Consider the following 380-residue polypeptide: Queuine tRNA-ribosyltransferase (380 aa).

Residue Asp-93 is the Proton acceptor of the active site. Residues Asp-93 to Phe-97, Asp-147, Gln-198, and Gly-225 contribute to the substrate site. The segment at Gly-256–Asn-262 is RNA binding. Residue Asp-275 is the Nucleophile of the active site. The segment at Ala-280–Arg-284 is RNA binding; important for wobble base 34 recognition. 4 residues coordinate Zn(2+): Cys-313, Cys-315, Cys-318, and His-344.

This sequence belongs to the queuine tRNA-ribosyltransferase family. As to quaternary structure, homodimer. Within each dimer, one monomer is responsible for RNA recognition and catalysis, while the other monomer binds to the replacement base PreQ1. Zn(2+) serves as cofactor.

The catalysed reaction is 7-aminomethyl-7-carbaguanine + guanosine(34) in tRNA = 7-aminomethyl-7-carbaguanosine(34) in tRNA + guanine. It functions in the pathway tRNA modification; tRNA-queuosine biosynthesis. In terms of biological role, catalyzes the base-exchange of a guanine (G) residue with the queuine precursor 7-aminomethyl-7-deazaguanine (PreQ1) at position 34 (anticodon wobble position) in tRNAs with GU(N) anticodons (tRNA-Asp, -Asn, -His and -Tyr). Catalysis occurs through a double-displacement mechanism. The nucleophile active site attacks the C1' of nucleotide 34 to detach the guanine base from the RNA, forming a covalent enzyme-RNA intermediate. The proton acceptor active site deprotonates the incoming PreQ1, allowing a nucleophilic attack on the C1' of the ribose to form the product. After dissociation, two additional enzymatic reactions on the tRNA convert PreQ1 to queuine (Q), resulting in the hypermodified nucleoside queuosine (7-(((4,5-cis-dihydroxy-2-cyclopenten-1-yl)amino)methyl)-7-deazaguanosine). This Clostridium perfringens (strain ATCC 13124 / DSM 756 / JCM 1290 / NCIMB 6125 / NCTC 8237 / Type A) protein is Queuine tRNA-ribosyltransferase.